The following is a 216-amino-acid chain: Deoxyribose-phosphate aldolase (216 aa).

Asp89 (proton donor/acceptor) is an active-site residue. Residue Lys152 is the Schiff-base intermediate with acetaldehyde of the active site. The active-site Proton donor/acceptor is Lys181.

This sequence belongs to the DeoC/FbaB aldolase family. DeoC type 1 subfamily.

The protein resides in the cytoplasm. The enzyme catalyses 2-deoxy-D-ribose 5-phosphate = D-glyceraldehyde 3-phosphate + acetaldehyde. It participates in carbohydrate degradation; 2-deoxy-D-ribose 1-phosphate degradation; D-glyceraldehyde 3-phosphate and acetaldehyde from 2-deoxy-alpha-D-ribose 1-phosphate: step 2/2. Catalyzes a reversible aldol reaction between acetaldehyde and D-glyceraldehyde 3-phosphate to generate 2-deoxy-D-ribose 5-phosphate. This Clostridium tetani (strain Massachusetts / E88) protein is Deoxyribose-phosphate aldolase.